A 58-amino-acid chain; its full sequence is Conotoxin Im5.4 (58 aa).

The N-terminal stretch at 1 to 18 (MRCLPVVVFLLLLLSAAA) is a signal peptide. Residues 19–28 (APGVGSKTER) constitute a propeptide that is removed on maturation.

This sequence belongs to the conotoxin T superfamily. In terms of processing, contains 2 disulfide bonds that can be either 'C1-C3, C2-C4' or 'C1-C4, C2-C3', since these disulfide connectivities have been observed for conotoxins with cysteine framework V (for examples, see AC P0DQQ7 and AC P81755). As to expression, expressed by the venom duct.

It is found in the secreted. In terms of biological role, probable neurotoxin. The polypeptide is Conotoxin Im5.4 (Conus imperialis (Imperial cone)).